We begin with the raw amino-acid sequence, 257 residues long: MAQQLSESDSGWWVVSDRGRIWLPEGELPYGSAAQWHLVGKMAYRIGEWQGMPVWLLCLTYPQDMASVRQLIDADRGLFQLAGRGVQLAEFFQSHRFCGYCGHPMHAGQQEWVRLCAHCQQRYYPQIAPCIIVAIRRDDHILLARHNRHRNGIYTVLAGFVEVGETLEQAAAREIFEESRLQVKNLRYVTSQPWPFPHSLMMAFLADYAAGDLCHDPKELQEADWYRYDRLPQLPPVGTVARRLIEDTVALCRVQHE.

Arg69 contributes to the substrate binding site. Zn(2+) contacts are provided by Cys98 and Cys101. Glu111 provides a ligand contact to substrate. Zn(2+) is bound by residues Cys116 and Cys119. Substrate is bound at residue Tyr124. Residues 125-248 (PQIAPCIIVA…TVARRLIEDT (124 aa)) form the Nudix hydrolase domain. Residues Ala158, Glu174, and Glu178 each coordinate a divalent metal cation. Positions 159 to 180 (GFVEVGETLEQAAAREIFEESR) match the Nudix box motif. 192 to 199 (QPWPFPHS) provides a ligand contact to substrate. Glu219 contacts a divalent metal cation. Ala241 lines the substrate pocket.

This sequence belongs to the Nudix hydrolase family. NudC subfamily. Homodimer. Mg(2+) serves as cofactor. It depends on Mn(2+) as a cofactor. The cofactor is Zn(2+).

The catalysed reaction is a 5'-end NAD(+)-phospho-ribonucleoside in mRNA + H2O = a 5'-end phospho-adenosine-phospho-ribonucleoside in mRNA + beta-nicotinamide D-ribonucleotide + 2 H(+). It carries out the reaction NAD(+) + H2O = beta-nicotinamide D-ribonucleotide + AMP + 2 H(+). The enzyme catalyses NADH + H2O = reduced beta-nicotinamide D-ribonucleotide + AMP + 2 H(+). MRNA decapping enzyme that specifically removes the nicotinamide adenine dinucleotide (NAD) cap from a subset of mRNAs by hydrolyzing the diphosphate linkage to produce nicotinamide mononucleotide (NMN) and 5' monophosphate mRNA. The NAD-cap is present at the 5'-end of some mRNAs and stabilizes RNA against 5'-processing. Has preference for mRNAs with a 5'-end purine. Catalyzes the hydrolysis of a broad range of dinucleotide pyrophosphates. In Edwardsiella ictaluri (strain 93-146), this protein is NAD-capped RNA hydrolase NudC.